The chain runs to 638 residues: LIM domain kinase 2 (638 aa).

LIM zinc-binding domains lie at 12-63 and 72-124; these read CRGC…CHKD and CHGC…CGKC. A PDZ domain is found at 152-239; it reads LISMPATTEC…TLQLLIEHDP (88 aa). Phosphothreonine is present on threonine 210. The segment covering 257–266 has biased composition (polar residues); sequence MQSSGHTLML. Residues 257–304 form a disordered region; that stretch reads MQSSGHTLMLSTLDAKENQEGTLRRRSLRRSNSISKSPGPSSPKEPLL. Residues 270-279 are compositionally biased toward basic and acidic residues; sequence DAKENQEGTL. Over residues 286–304 the composition is skewed to low complexity; the sequence is RSNSISKSPGPSSPKEPLL. Residues serine 293 and serine 298 each carry the phosphoserine modification. The Protein kinase domain occupies 331-608; sequence LIHGEVLGKG…DSFEALSLFL (278 aa). ATP-binding positions include 337 to 345 and lysine 360; that span reads LGKGFFGQA. Aspartate 451 is a catalytic residue. At threonine 505 the chain carries Phosphothreonine; by ROCK1 and CDC42BP.

Belongs to the protein kinase superfamily. TKL Ser/Thr protein kinase family. As to quaternary structure, binds ROCK1 and MARF1. Interacts with NISCH. Post-translationally, phosphorylated on serine and/or threonine residues by ROCK1. Found in various tissues at moderate levels, except for testis, which shows very low expression.

It is found in the cytoplasm. Its subcellular location is the nucleus. The protein resides in the perinuclear region. It localises to the cytoskeleton. The protein localises to the spindle. It is found in the microtubule organizing center. Its subcellular location is the centrosome. It catalyses the reaction L-seryl-[protein] + ATP = O-phospho-L-seryl-[protein] + ADP + H(+). It carries out the reaction L-threonyl-[protein] + ATP = O-phospho-L-threonyl-[protein] + ADP + H(+). Functionally, serine/threonine-protein kinase that plays an essential role in the regulation of actin filament dynamics. Acts downstream of several Rho family GTPase signal transduction pathways. Involved in astral microtubule organization and mitotic spindle orientation during early stages of mitosis by mediating phosphorylation of TPPP. Displays serine/threonine-specific phosphorylation of myelin basic protein and histone (MBP) in vitro. Suppresses ciliogenesis via multiple pathways; phosphorylation of CFL1, directional trafficking of ciliary vesicles to the ciliary base, and by facilitating YAP1 nuclear localization where it acts as a transcriptional corepressor of the TEAD4 target genes AURKA and PLK1. This is LIM domain kinase 2 (Limk2) from Rattus norvegicus (Rat).